A 575-amino-acid chain; its full sequence is Jasmonoyl--L-amino acid synthetase JAR1 (575 aa).

Residues 10–30 (MNRVIDEFDEMTRNAHQVQKQ) adopt a coiled-coil conformation. Ser98 lines the ATP pocket. Residue Ser101 coordinates jasmonate. Residues Met118, Thr121, Gly163, Asn168, and 331-336 (GSSEGW) contribute to the ATP site. Residue 166-170 (TTNVY) participates in an L-alpha-amino acid binding. Jasmonate is bound at residue 328-331 (HDYG). Position 530 to 534 (530 to 534 (KIQEH)) interacts with an L-alpha-amino acid. An ATP-binding site is contributed by Lys557.

Belongs to the IAA-amido conjugating enzyme family. Interacts with GSTU20/FIP1 under continuous far red (cFR) light; this binding increases its activity and determines the priority of substrate binding.

It is found in the cytoplasm. It catalyses the reaction a jasmonate + an L-alpha-amino acid + ATP = a jasmonyl-L-amino acid + AMP + diphosphate + H(+). The enzyme catalyses (+)-7-isojasmonate + L-isoleucine + ATP = L-isoleucine-(+)-7-isojasmonate + AMP + diphosphate + H(+). Its activity is regulated as follows. Activated by GSTU20/FIP1. Its function is as follows. Catalyzes the synthesis of jasmonates-amino acid conjugates by adenylation; can use Ile and, in vitro at least, Val, Leu and Phe as conjugating amino acids on jasmonic acid (JA) and 9,10-dihydro-JA substrates, and to a lower extent, on 3-oxo-2-(2Z-pentenyl)-cyclopentane-1-butyric acid (OPC-4) and 12-hydroxy-JA (12-OH-JA). Can synthesize adenosine 5-tetraphosphate in vitro. Required for the JA-mediated signaling pathway that regulates many developmental and defense mechanisms, including growth root inhibition, vegetative storage proteins (VSPs) accumulation, induced systemic resistance (ISR), response to wounding and herbivores, tolerance to ozone O(3) (probably having a role in lesion containment). Plays an important role in the accumulation of JA-Ile in response to wounding, both locally and systemically; promotes JA responding genes especially in distal part of wounded plants, via the JA-Ile-stimulated degradation of JAZ repressor proteins by the SCF(COI)E3 ubiquitin-protein ligase pathway. Involved in the apoptosis-like programmed cell death (PCD) induced by fungal toxin fumonisin B1-mediated (FB1). Required for volatile compounds (C6-aldehydes and allo-ocimene)-mediated defense activation. Involved in the non-pathogenic rhizobacterium-mediated ISR (defense priming) by P.fluorescens (strains CHAOr and WCS417r) and P.putida LSW17S against infection leaf pathogens such as P.syringae pv. tomato and H.parasitica. Required for the JA-dependent resistance to fungi such as P.irregulare, U.vignae and U.appendiculatus. Necessary to induce systemic resistance against R.solanaceraum and P.syringae pv. tomato with P.oligandrum (a non-pathogenic biocontrol agent) cell wall protein fraction (CWP). Mediates PGIP2 accumulation in response to B.cinerea infection and thus contributes to resistance against this pathogen. Modulates the UV-B alteration of leaves attractiveness to diamondback moths P.xylostella leading to insect oviposition. Involved in the regulation of far-red light influence on development, being an actor of the interplay between light and JA signaling. Seems necessary for the salicylic acid (SA)-mediated, NPR1-independent resistance pathway. May contribute to the chitin-elicited pathway. Contributes to the sensitivity toward F.graminearum. The protein is Jasmonoyl--L-amino acid synthetase JAR1 of Arabidopsis thaliana (Mouse-ear cress).